The chain runs to 270 residues: Type III pantothenate kinase (270 aa).

6–13 (DAGNTNIV) contacts ATP. 107–110 (GADR) is a binding site for substrate. Asp-109 functions as the Proton acceptor in the catalytic mechanism. Asp-129 lines the K(+) pocket. Thr-132 lines the ATP pocket. Thr-184 contacts substrate.

Belongs to the type III pantothenate kinase family. Homodimer. It depends on NH4(+) as a cofactor. The cofactor is K(+).

It localises to the cytoplasm. The catalysed reaction is (R)-pantothenate + ATP = (R)-4'-phosphopantothenate + ADP + H(+). Its pathway is cofactor biosynthesis; coenzyme A biosynthesis; CoA from (R)-pantothenate: step 1/5. Functionally, catalyzes the phosphorylation of pantothenate (Pan), the first step in CoA biosynthesis. This chain is Type III pantothenate kinase, found in Gluconobacter oxydans (strain 621H) (Gluconobacter suboxydans).